We begin with the raw amino-acid sequence, 145 residues long: Toxin coregulated pilus biosynthesis protein H (145 aa).

Functionally, involved in TCP pilus biogenesis. This is Toxin coregulated pilus biosynthesis protein H (tcpH) from Vibrio cholerae serotype O1 (strain ATCC 39315 / El Tor Inaba N16961).